The primary structure comprises 130 residues: Immunoglobulin kappa chain variable 9-120 (130 aa).

A signal peptide spans 1 to 22; the sequence is MDMRAPAQIFGFLLLLFQGTRC. Residues 23 to 45 form a framework-1 region; it reads DIQMTQSPSSLSASLGERVSLTC. Cys45 and Cys110 are joined by a disulfide. A complementarity-determining-1 region spans residues 46 to 56; it reads RASQDIGSSLN. Residues 57–71 form a framework-2 region; that stretch reads WLQQEPDGTIKRLIY. The tract at residues 72–78 is complementarity-determining-2; the sequence is ATSSLDS. Residues 79–110 are framework-3; that stretch reads GVPKRFSGSRSGSDYSLTISSLESEDFVDYYC. The segment at 111 to 119 is complementarity-determining-3; that stretch reads LQYASSPWT. A framework-4 region spans residues 120-129; it reads FGGGTKLEIK.

The protein is Immunoglobulin kappa chain variable 9-120 of Mus musculus (Mouse).